Reading from the N-terminus, the 497-residue chain is Probable cytosol aminopeptidase (497 aa).

Mn(2+) contacts are provided by lysine 263 and aspartate 268. Lysine 275 is an active-site residue. The Mn(2+) site is built by aspartate 286, aspartate 345, and glutamate 347. Arginine 349 is a catalytic residue.

The protein belongs to the peptidase M17 family. The cofactor is Mn(2+).

It is found in the cytoplasm. It catalyses the reaction Release of an N-terminal amino acid, Xaa-|-Yaa-, in which Xaa is preferably Leu, but may be other amino acids including Pro although not Arg or Lys, and Yaa may be Pro. Amino acid amides and methyl esters are also readily hydrolyzed, but rates on arylamides are exceedingly low.. The enzyme catalyses Release of an N-terminal amino acid, preferentially leucine, but not glutamic or aspartic acids.. Presumably involved in the processing and regular turnover of intracellular proteins. Catalyzes the removal of unsubstituted N-terminal amino acids from various peptides. The sequence is that of Probable cytosol aminopeptidase from Brucella suis biovar 1 (strain 1330).